The primary structure comprises 258 residues: Bidirectional sugar transporter SWEET9 (258 aa).

Residues 1-7 lie on the Extracellular side of the membrane; sequence MFLKVHE. A helical transmembrane segment spans residues 8-28; sequence IAFLFGLLGNIVSFGVFLSPV. The MtN3/slv 1 domain maps to 10 to 96; it reads FLFGLLGNIV…FLYILYAPRE (87 aa). The Cytoplasmic portion of the chain corresponds to 29–42; the sequence is PTFYGIYKKKSSKG. A helical membrane pass occupies residues 43 to 63; that stretch reads FQSIPYICALASATLLLYYGI. Residues 64 to 69 are Extracellular-facing; the sequence is MKTHAY. The chain crosses the membrane as a helical span at residues 70-90; the sequence is LIISINTFGCFIEISYLFLYI. Over 91–103 the chain is Cytoplasmic; sequence LYAPREAKISTLK. A helical membrane pass occupies residues 104-124; it reads LIVICNIGGLGLLILLVNLLV. Over 125–131 the chain is Extracellular; that stretch reads PKQHRVS. The helical transmembrane segment at 132–152 threads the bilayer; sequence TVGWVCAAYSLAVFASPLSVM. The region spanning 132–216 is the MtN3/slv 2 domain; the sequence is TVGWVCAAYS…ILYMMYQGST (85 aa). The Cytoplasmic portion of the chain corresponds to 153–165; that stretch reads RKVIKTKSVEYMP. The chain crosses the membrane as a helical span at residues 166–186; it reads FLLSLSLTLNAVMWFFYGLLI. Over 187-189 the chain is Extracellular; the sequence is KDK. A helical membrane pass occupies residues 190–210; it reads FIAMPNILGFLFGVAQMILYM. At 211–258 the chain is on the cytoplasmic side; it reads MYQGSTKTDLPTENQLANKTDVNEVPIVAVELPDVGSDNVEGSVRPMK.

This sequence belongs to the SWEET sugar transporter family. Forms heterooligomers with SWEET1, SWEET5, SWEET8, SWEET11, SWEET13, SWEET16 and SWEET17. Specifically expressed in nectaries, mostly in the lower half of nectary parenchyma.

It localises to the cell membrane. Its subcellular location is the cytoplasmic vesicle membrane. It is found in the golgi apparatus. The protein localises to the trans-Golgi network membrane. In terms of biological role, mediates both low-affinity uptake and efflux of sugar across the plasma membrane. Nectary-specific sugar transporter required for nectar production by mediating the secretion of sucrose from the nectary parenchyma to the extracellular space. The polypeptide is Bidirectional sugar transporter SWEET9 (Arabidopsis thaliana (Mouse-ear cress)).